Here is a 143-residue protein sequence, read N- to C-terminus: Small ribosomal subunit protein eS12 (143 aa).

Residues lysine 85, lysine 95, and lysine 114 each participate in a glycyl lysine isopeptide (Lys-Gly) (interchain with G-Cter in ubiquitin) cross-link.

The protein belongs to the eukaryotic ribosomal protein eS12 family. Component of the small ribosomal subunit (SSU). Mature yeast ribosomes consist of a small (40S) and a large (60S) subunit. The 40S small subunit contains 1 molecule of ribosomal RNA (18S rRNA) and 33 different proteins (encoded by 57 genes). The large 60S subunit contains 3 rRNA molecules (25S, 5.8S and 5S rRNA) and 46 different proteins (encoded by 81 genes).

The protein resides in the cytoplasm. In terms of biological role, component of the ribosome, a large ribonucleoprotein complex responsible for the synthesis of proteins in the cell. The small ribosomal subunit (SSU) binds messenger RNAs (mRNAs) and translates the encoded message by selecting cognate aminoacyl-transfer RNA (tRNA) molecules. The large subunit (LSU) contains the ribosomal catalytic site termed the peptidyl transferase center (PTC), which catalyzes the formation of peptide bonds, thereby polymerizing the amino acids delivered by tRNAs into a polypeptide chain. The nascent polypeptides leave the ribosome through a tunnel in the LSU and interact with protein factors that function in enzymatic processing, targeting, and the membrane insertion of nascent chains at the exit of the ribosomal tunnel. This chain is Small ribosomal subunit protein eS12, found in Saccharomyces cerevisiae (strain ATCC 204508 / S288c) (Baker's yeast).